We begin with the raw amino-acid sequence, 990 residues long: DNA ligase 4 (990 aa).

Residues 57–84 (TQKKGRQPPGPRRKAGPHGHSNLSPHEA) are disordered. E324, K326, L327, R331, E394, F436, E496, K501, K518, and K520 together coordinate ATP. Residue K326 is the N6-AMP-lysine intermediate of the active site. E394 provides a ligand contact to Mg(2+). Mg(2+) is bound at residue E496. BRCT domains follow at residues 728–821 (PQSK…LPYL) and 900–989 (YMFS…RYQW).

The protein belongs to the ATP-dependent DNA ligase family. Mg(2+) serves as cofactor.

It localises to the nucleus. The enzyme catalyses ATP + (deoxyribonucleotide)n-3'-hydroxyl + 5'-phospho-(deoxyribonucleotide)m = (deoxyribonucleotide)n+m + AMP + diphosphate.. Functionally, DNA ligase involved in DNA non-homologous end joining (NHEJ); required for double-strand break (DSB) repair. In Phaeosphaeria nodorum (strain SN15 / ATCC MYA-4574 / FGSC 10173) (Glume blotch fungus), this protein is DNA ligase 4 (LIG4).